A 266-amino-acid polypeptide reads, in one-letter code: MPIPTPYEDLLRLVFERGTPKSDRTGTGTRSLFGHQMRYDLAAGFPLITTKKVHLKSVVYELLWFLRGESNVRWLQEHGVTIWDEWASETGELGPVYGVQWRSWPTPSGGHVDQISAAVDLLRTDPDSRRNIVSAWNVGEIPQMALPPCHAFFQFYVADGRLSCQLYQRSADLFLGVPFNIASYALLTHMMAAQAGLGVGEFVWTGGDCHIYDNHVEQVTEQLSRDPRPYPELVLAQRDSIFDYTYEDVVVKNYDPHPAIKAPVAV.

A dUMP-binding site is contributed by R24. H54 lines the (6R)-5,10-methylene-5,6,7,8-tetrahydrofolate pocket. DUMP is bound at residue 129-130 (RR). C149 serves as the catalytic Nucleophile. Residues 169–172 (RSAD), N180, and 210–212 (HIY) each bind dUMP. D172 is a binding site for (6R)-5,10-methylene-5,6,7,8-tetrahydrofolate. Residue A265 coordinates (6R)-5,10-methylene-5,6,7,8-tetrahydrofolate.

It belongs to the thymidylate synthase family. Bacterial-type ThyA subfamily. As to quaternary structure, homodimer.

It is found in the cytoplasm. The enzyme catalyses dUMP + (6R)-5,10-methylene-5,6,7,8-tetrahydrofolate = 7,8-dihydrofolate + dTMP. Its pathway is pyrimidine metabolism; dTTP biosynthesis. Catalyzes the reductive methylation of 2'-deoxyuridine-5'-monophosphate (dUMP) to 2'-deoxythymidine-5'-monophosphate (dTMP) while utilizing 5,10-methylenetetrahydrofolate (mTHF) as the methyl donor and reductant in the reaction, yielding dihydrofolate (DHF) as a by-product. This enzymatic reaction provides an intracellular de novo source of dTMP, an essential precursor for DNA biosynthesis. This Mycobacterium sp. (strain KMS) protein is Thymidylate synthase.